A 148-amino-acid chain; its full sequence is Large ribosomal subunit protein uL11 (148 aa).

The protein belongs to the universal ribosomal protein uL11 family. In terms of assembly, part of the ribosomal stalk of the 50S ribosomal subunit. Interacts with L10 and the large rRNA to form the base of the stalk. L10 forms an elongated spine to which L12 dimers bind in a sequential fashion forming a multimeric L10(L12)X complex. One or more lysine residues are methylated.

Forms part of the ribosomal stalk which helps the ribosome interact with GTP-bound translation factors. In Myxococcus xanthus (strain DK1622), this protein is Large ribosomal subunit protein uL11.